The chain runs to 98 residues: Post-transcriptional regulator ComN (98 aa).

As to quaternary structure, interacts directly with DivIVA.

The protein resides in the cytoplasm. Its function is as follows. Required for post-transcription initiation control of the comE operon. Promotes the accumulation of its target comE mRNA to septal and polar sites. The sequence is that of Post-transcriptional regulator ComN (comN) from Bacillus subtilis (strain 168).